The following is a 122-amino-acid chain: MIVAVGIDVVLVERFTRALARTPLLADRLFTEAERYTRSGNPRSPESLAARFAAKEAVAKALGAPAGLSWHDCEIVPDPDGRPWLTVSGTVAAAAVERGASRWHLSLSHDGGIASAMVVAER.

Mg(2+)-binding residues include D8 and E56.

It belongs to the P-Pant transferase superfamily. AcpS family. Requires Mg(2+) as cofactor.

It localises to the cytoplasm. It catalyses the reaction apo-[ACP] + CoA = holo-[ACP] + adenosine 3',5'-bisphosphate + H(+). Functionally, transfers the 4'-phosphopantetheine moiety from coenzyme A to a Ser of acyl-carrier-protein. This chain is Holo-[acyl-carrier-protein] synthase, found in Salinispora arenicola (strain CNS-205).